A 274-amino-acid chain; its full sequence is NADH-ubiquinone oxidoreductase chain 2 (274 aa).

Helical transmembrane passes span 28 to 48 (MIIMSALLLKSGAAPFHFWFP), 54 to 74 (LTWMNALMLMTWQKIAPLMLI), 79 to 99 (IKYLLLISVILSVIIGAIGGL), 107 to 127 (LMAFSSINHLGWMLSSLMFSE), 128 to 148 (SIWLIYFFFYSFLSFVLTFMF), 171 to 191 (FTLFMNFLSLGGLPPFLGFLP), 206 to 226 (FLLTLMMMSTLITLFFYLRIC), and 254 to 274 (LIMTFFSIFGLFMISLFYFMF).

This sequence belongs to the complex I subunit 2 family.

The protein localises to the mitochondrion inner membrane. The enzyme catalyses a ubiquinone + NADH + 5 H(+)(in) = a ubiquinol + NAD(+) + 4 H(+)(out). Core subunit of the mitochondrial membrane respiratory chain NADH dehydrogenase (Complex I) that is believed to belong to the minimal assembly required for catalysis. Complex I functions in the transfer of electrons from NADH to the respiratory chain. The immediate electron acceptor for the enzyme is believed to be ubiquinone. The sequence is that of NADH-ubiquinone oxidoreductase chain 2 (mt:ND2) from Drosophila sechellia (Fruit fly).